Reading from the N-terminus, the 66-residue chain is Metallothionein-like protein type 3 (66 aa).

The protein belongs to the metallothionein superfamily. Type 15 family.

Its function is as follows. Metallothioneins have a high content of cysteine residues that bind various heavy metals. This is Metallothionein-like protein type 3 (MT2) from Malus domestica (Apple).